Here is an 80-residue protein sequence, read N- to C-terminus: Cell division activator CedA (80 aa).

Belongs to the CedA family.

Its function is as follows. Activates the cell division inhibited by chromosomal DNA over-replication. This Citrobacter koseri (strain ATCC BAA-895 / CDC 4225-83 / SGSC4696) protein is Cell division activator CedA.